The primary structure comprises 608 residues: Dolichyl-diphosphooligosaccharide--protein glycosyltransferase subunit 1 (608 aa).

A signal peptide spans 1-24 (MEAPAVCLLPLLLLLWAWAPAPGR). The Lumenal portion of the chain corresponds to 25-435 (ASPEALPLVN…VVHYTFNKVL (411 aa)). Lys188 is modified (N6-acetyllysine). An N-linked (GlcNAc...) asparagine glycan is attached at Asn300. The chain crosses the membrane as a helical span at residues 436–456 (MLQEPLLVVAAFYILFFTVIV). Residues 457–607 (YVRLDFSITK…VTKIDHILDA (151 aa)) lie on the Cytoplasmic side of the membrane. An N6-acetyllysine; alternate modification is found at Lys539. Lys539 is covalently cross-linked (Glycyl lysine isopeptide (Lys-Gly) (interchain with G-Cter in SUMO2); alternate).

This sequence belongs to the OST1 family. Component of the oligosaccharyltransferase (OST) complex. OST exists in two different complex forms which contain common core subunits RPN1, RPN2, OST48, OST4, DAD1 and TMEM258, either STT3A or STT3B as catalytic subunits, and form-specific accessory subunits. STT3A complex assembly occurs through the formation of 3 subcomplexes. Subcomplex 1 contains RPN1 and TMEM258, subcomplex 2 contains the STT3A-specific subunits STT3A, DC2/OSTC, and KCP2 as well as the core subunit OST4, and subcomplex 3 contains RPN2, DAD1, and OST48. The STT3A complex can form stable complexes with the Sec61 complex or with both the Sec61 and TRAP complexes. Interacts with TMEM35A/NACHO. Post-translationally, ubiquitinated by the ECS(ASB11) complex. In terms of processing, ufmylated by UFL1 in response to endoplasmic reticulum stress, promoting reticulophagy of endoplasmic reticulum sheets. As to expression, detected in liver (at protein level).

The protein localises to the endoplasmic reticulum membrane. It functions in the pathway protein modification; protein glycosylation. In terms of biological role, subunit of the oligosaccharyl transferase (OST) complex that catalyzes the initial transfer of a defined glycan (Glc(3)Man(9)GlcNAc(2) in eukaryotes) from the lipid carrier dolichol-pyrophosphate to an asparagine residue within an Asn-X-Ser/Thr consensus motif in nascent polypeptide chains, the first step in protein N-glycosylation. N-glycosylation occurs cotranslationally and the complex associates with the Sec61 complex at the channel-forming translocon complex that mediates protein translocation across the endoplasmic reticulum (ER). All subunits are required for a maximal enzyme activity. The protein is Dolichyl-diphosphooligosaccharide--protein glycosyltransferase subunit 1 of Sus scrofa (Pig).